A 258-amino-acid polypeptide reads, in one-letter code: Imidazole glycerol phosphate synthase subunit HisF (258 aa).

Catalysis depends on residues Asp-11 and Asp-130.

It belongs to the HisA/HisF family. Heterodimer of HisH and HisF.

It localises to the cytoplasm. The catalysed reaction is 5-[(5-phospho-1-deoxy-D-ribulos-1-ylimino)methylamino]-1-(5-phospho-beta-D-ribosyl)imidazole-4-carboxamide + L-glutamine = D-erythro-1-(imidazol-4-yl)glycerol 3-phosphate + 5-amino-1-(5-phospho-beta-D-ribosyl)imidazole-4-carboxamide + L-glutamate + H(+). It participates in amino-acid biosynthesis; L-histidine biosynthesis; L-histidine from 5-phospho-alpha-D-ribose 1-diphosphate: step 5/9. Functionally, IGPS catalyzes the conversion of PRFAR and glutamine to IGP, AICAR and glutamate. The HisF subunit catalyzes the cyclization activity that produces IGP and AICAR from PRFAR using the ammonia provided by the HisH subunit. This Shigella boydii serotype 4 (strain Sb227) protein is Imidazole glycerol phosphate synthase subunit HisF.